We begin with the raw amino-acid sequence, 484 residues long: Protein phosphatase 1B (484 aa).

Residues 1-14 are compositionally biased toward basic and acidic residues; the sequence is MGAFLDKPKTEKHN. The tract at residues 1–20 is disordered; that stretch reads MGAFLDKPKTEKHNAHGAGN. The N-myristoyl glycine moiety is linked to residue glycine 2. A Glycyl lysine isopeptide (Lys-Gly) (interchain with G-Cter in ISG15) cross-link involves residue lysine 12. A PPM-type phosphatase domain is found at 23–295; the sequence is RYGLSSMQGW…DNMSIVLVCF (273 aa). Mn(2+) is bound by residues aspartate 60 and glycine 61. A Glycyl lysine isopeptide (Lys-Gly) (interchain with G-Cter in ISG15) cross-link involves residue lysine 142. Residues aspartate 243 and aspartate 286 each contribute to the Mn(2+) site. Serine 391 carries the post-translational modification Phosphoserine. The interval 431–484 is disordered; that stretch reads EENPAEQAATAASSNSDAGNTVAMQESHTESKSDLAELDSCTEDAGTKMSGEKL. Polar residues predominate over residues 440-456; that stretch reads TAASSNSDAGNTVAMQE.

It belongs to the PP2C family. As to quaternary structure, monomer. Interacts with PAK6. Interacts with the phosphorylated form of IKBKB/IKKB. The cofactor is Mg(2+). It depends on Mn(2+) as a cofactor. Post-translationally, isgylation negatively regulates its activity. N-myristoylation is essential for the recognition of its substrates for dephosphorylation.

It localises to the cytoplasm. The protein resides in the cytosol. Its subcellular location is the membrane. The catalysed reaction is O-phospho-L-seryl-[protein] + H2O = L-seryl-[protein] + phosphate. It catalyses the reaction O-phospho-L-threonyl-[protein] + H2O = L-threonyl-[protein] + phosphate. Its function is as follows. Enzyme with a broad specificity. Dephosphorylates PRKAA1 and PRKAA2. Inhibits TBK1-mediated antiviral signaling by dephosphorylating it at 'Ser-172'. Plays an important role in the termination of TNF-alpha-mediated NF-kappa-B activation through dephosphorylating and inactivating IKBKB/IKKB. The protein is Protein phosphatase 1B (PPM1B) of Bos taurus (Bovine).